Here is a 206-residue protein sequence, read N- to C-terminus: Large ribosomal subunit protein uL3 (206 aa).

The protein belongs to the universal ribosomal protein uL3 family. As to quaternary structure, part of the 50S ribosomal subunit. Forms a cluster with proteins L14 and L19.

One of the primary rRNA binding proteins, it binds directly near the 3'-end of the 23S rRNA, where it nucleates assembly of the 50S subunit. This Thermus thermophilus (strain ATCC BAA-163 / DSM 7039 / HB27) protein is Large ribosomal subunit protein uL3.